Reading from the N-terminus, the 210-residue chain is Orotate phosphoribosyltransferase (210 aa).

5-phospho-alpha-D-ribose 1-diphosphate is bound by residues R94, K98, H100, and E120 to S128. An orotate-binding site is contributed by S124.

Belongs to the purine/pyrimidine phosphoribosyltransferase family. PyrE subfamily. As to quaternary structure, homodimer. Requires Mg(2+) as cofactor.

It catalyses the reaction orotidine 5'-phosphate + diphosphate = orotate + 5-phospho-alpha-D-ribose 1-diphosphate. It functions in the pathway pyrimidine metabolism; UMP biosynthesis via de novo pathway; UMP from orotate: step 1/2. Functionally, catalyzes the transfer of a ribosyl phosphate group from 5-phosphoribose 1-diphosphate to orotate, leading to the formation of orotidine monophosphate (OMP). This is Orotate phosphoribosyltransferase from Bacillus cytotoxicus (strain DSM 22905 / CIP 110041 / 391-98 / NVH 391-98).